The following is a 428-amino-acid chain: Inward rectifier potassium channel 2 (428 aa).

At 1–81 (MGSVRTNRYS…IFTTCVDIRW (81 aa)) the chain is on the cytoplasmic side. At Cys-76 the chain carries S-nitrosocysteine. The helical transmembrane segment at 82–106 (RWMLVIFCLAFVLSWLFFGCVFWLI) threads the bilayer. Topologically, residues 107–128 (ALLHGDLDTSKVSKACVSEVNS) are extracellular. Residues 129-140 (FTAAFLFSIETQ) constitute an intramembrane region (helical; Pore-forming). The segment at residues 141 to 147 (TTIGYGF) is an intramembrane region (pore-forming). Positions 142–147 (TIGYGF) match the Selectivity filter motif. Residues 148 to 156 (RCVTDECPI) are Extracellular-facing. Residues 157–178 (AVFMVVFQSIVGCIIDAFIIGA) traverse the membrane as a helical segment. The Cytoplasmic portion of the chain corresponds to 179 to 428 (VMAKMAKPKK…PRPLRRESEI (250 aa)). The polyphosphoinositide (PIP2)-binding stretch occupies residues 181–208 (AKMAKPKKRNETLVFSHNAVIAMRDGKL). Positions 383–428 (TSKEEEEDSENGVPESTSTDSPPGIDLHNQASVPLEPRPLRRESEI) are disordered. The short motif at 426–428 (SEI) is the PDZ-binding element.

Belongs to the inward rectifier-type potassium channel (TC 1.A.2.1) family. KCNJ2 subfamily. Homotetramer. Homomultimeric and heteromultimeric association with KCNJ4/Kir2.3. Can form heteromeric channels with Kir2.6/KCNJ18. Associates, via its PDZ-recognition domain, with a complex containing LIN7A, LIN7B, LIN7C, DLG1, CASK and APBA1. In terms of processing, S-nitrosylation increases the open probability and inward rectifying currents. Prominently expressed in the central nervous system. Also found in other excitable tissues such as heart and skeletal muscle.

The protein resides in the cell membrane. It localises to the sarcolemma. The protein localises to the T-tubule. It carries out the reaction K(+)(in) = K(+)(out). Activated by phosphatidylinositol 4,5 biphosphate (PtdIns(4,5)P2). In terms of biological role, inward rectifier potassium channels are characterized by a greater tendency to allow potassium to flow into the cell rather than out of it. Their voltage dependence is regulated by the concentration of extracellular potassium; as external potassium is raised, the voltage range of the channel opening shifts to more positive voltages. The inward rectification is mainly due to the blockage of outward current by internal magnesium. Can be blocked by extracellular barium and cesium. Probably participates in establishing action potential waveform and excitability of neuronal and muscle tissues. This Mus musculus (Mouse) protein is Inward rectifier potassium channel 2 (Kcnj2).